Here is a 431-residue protein sequence, read N- to C-terminus: Glutamate-1-semialdehyde 2,1-aminomutase (431 aa).

An N6-(pyridoxal phosphate)lysine modification is found at lysine 269.

Belongs to the class-III pyridoxal-phosphate-dependent aminotransferase family. HemL subfamily. As to quaternary structure, homodimer. It depends on pyridoxal 5'-phosphate as a cofactor.

The protein resides in the cytoplasm. The catalysed reaction is (S)-4-amino-5-oxopentanoate = 5-aminolevulinate. The protein operates within porphyrin-containing compound metabolism; protoporphyrin-IX biosynthesis; 5-aminolevulinate from L-glutamyl-tRNA(Glu): step 2/2. It participates in porphyrin-containing compound metabolism; chlorophyll biosynthesis. The polypeptide is Glutamate-1-semialdehyde 2,1-aminomutase (Chlorobium phaeobacteroides (strain BS1)).